The chain runs to 459 residues: Diaminopimelate decarboxylase (459 aa).

Lysine 89 carries the N6-(pyridoxal phosphate)lysine modification. Residues glycine 271 and 313–316 (EPGR) each bind pyridoxal 5'-phosphate. Positions 316, 357, and 361 each coordinate substrate. Cysteine 388 serves as the catalytic Proton donor. The substrate site is built by glutamate 389 and tyrosine 418. A pyridoxal 5'-phosphate-binding site is contributed by tyrosine 418.

This sequence belongs to the Orn/Lys/Arg decarboxylase class-II family. LysA subfamily. Homodimer. Requires pyridoxal 5'-phosphate as cofactor.

The catalysed reaction is meso-2,6-diaminopimelate + H(+) = L-lysine + CO2. The protein operates within amino-acid biosynthesis; L-lysine biosynthesis via DAP pathway; L-lysine from DL-2,6-diaminopimelate: step 1/1. Its function is as follows. Specifically catalyzes the decarboxylation of meso-diaminopimelate (meso-DAP) to L-lysine. The polypeptide is Diaminopimelate decarboxylase (Corynebacterium efficiens (strain DSM 44549 / YS-314 / AJ 12310 / JCM 11189 / NBRC 100395)).